Here is a 38-residue protein sequence, read N- to C-terminus: Large ribosomal subunit protein bL36 (38 aa).

Belongs to the bacterial ribosomal protein bL36 family.

This chain is Large ribosomal subunit protein bL36, found in Lactobacillus johnsonii (strain CNCM I-12250 / La1 / NCC 533).